Consider the following 363-residue polypeptide: Chorismate synthase (363 aa).

The NADP(+) site is built by Arg48 and Arg54. FMN is bound by residues 125–127 (RSS), 237–238 (NA), Gly277, 292–296 (KPTSS), and Arg318.

The protein belongs to the chorismate synthase family. In terms of assembly, homotetramer. It depends on FMNH2 as a cofactor.

It catalyses the reaction 5-O-(1-carboxyvinyl)-3-phosphoshikimate = chorismate + phosphate. Its pathway is metabolic intermediate biosynthesis; chorismate biosynthesis; chorismate from D-erythrose 4-phosphate and phosphoenolpyruvate: step 7/7. In terms of biological role, catalyzes the anti-1,4-elimination of the C-3 phosphate and the C-6 proR hydrogen from 5-enolpyruvylshikimate-3-phosphate (EPSP) to yield chorismate, which is the branch point compound that serves as the starting substrate for the three terminal pathways of aromatic amino acid biosynthesis. This reaction introduces a second double bond into the aromatic ring system. The protein is Chorismate synthase of Pseudomonas putida (strain ATCC 700007 / DSM 6899 / JCM 31910 / BCRC 17059 / LMG 24140 / F1).